Consider the following 65-residue polypeptide: uncharacterized protein (65 aa).

Cysteine 9 functions as the Nucleophile in the catalytic mechanism. The active site involves arginine 15.

This sequence belongs to the low molecular weight phosphotyrosine protein phosphatase family.

This is an uncharacterized protein from Synechococcus sp. (strain WH8020).